Reading from the N-terminus, the 307-residue chain is Glutathione synthetase (307 aa).

The region spanning 120–304 is the ATP-grasp domain; sequence KLGALRYSHL…VSDKVIEKLL (185 aa). Residue 146–202 coordinates ATP; the sequence is AQINHDVVVKPLGGKGGQGVIRLTKDSPGIKAMIELITSQEQLPVMMQKFIPEVKEG. Mg(2+) contacts are provided by Glu275 and Asn277.

Belongs to the prokaryotic GSH synthase family. It depends on Mg(2+) as a cofactor. Mn(2+) is required as a cofactor.

It catalyses the reaction gamma-L-glutamyl-L-cysteine + glycine + ATP = glutathione + ADP + phosphate + H(+). It functions in the pathway sulfur metabolism; glutathione biosynthesis; glutathione from L-cysteine and L-glutamate: step 2/2. The polypeptide is Glutathione synthetase (Prochlorococcus marinus subsp. pastoris (strain CCMP1986 / NIES-2087 / MED4)).